Reading from the N-terminus, the 329-residue chain is uncharacterized protein (329 aa).

The tract at residues Ser-284 to Ser-303 is disordered.

This is an uncharacterized protein from Methanocaldococcus jannaschii (strain ATCC 43067 / DSM 2661 / JAL-1 / JCM 10045 / NBRC 100440) (Methanococcus jannaschii).